The following is a 249-amino-acid chain: Tabinhibitin 4 (249 aa).

An N-terminal signal peptide occupies residues 1–23; that stretch reads MTLNVYFVLLSPYSLQSVPLPLT. The Cell attachment site signature appears at 31–33; it reads RGD. Residues 64–207 form the SCP domain; that stretch reads LQKTNWLRGV…LKRALFTCNF (144 aa). The Cell attachment site signature appears at 220-222; the sequence is RGD.

Belongs to the CRISP family. In terms of tissue distribution, expressed in salivary glands.

It is found in the secreted. Its function is as follows. Inhibits platelet aggregation induced by all agonists tested (ADP, arachidonic acid, the thromboxane A2 analog U46619, thrombin, and snake venom snaclecs (TMVA that activates platelet through GPIB, and stejnulxin that specifically acts through GPVI (GP6))). May act by competing with fibrinogen for binding to glycoprotein IIb/IIIa (ITGA2B/ITGB3). The sequence is that of Tabinhibitin 4 from Tabanus yao (Horsefly).